A 289-amino-acid chain; its full sequence is tRNA dimethylallyltransferase (289 aa).

Residue 9–16 (GTTASGKT) coordinates ATP. 11–16 (TASGKT) provides a ligand contact to substrate. The tract at residues 34 to 37 (DSLC) is interaction with substrate tRNA.

The protein belongs to the IPP transferase family. Monomer. Requires Mg(2+) as cofactor.

It catalyses the reaction adenosine(37) in tRNA + dimethylallyl diphosphate = N(6)-dimethylallyladenosine(37) in tRNA + diphosphate. In terms of biological role, catalyzes the transfer of a dimethylallyl group onto the adenine at position 37 in tRNAs that read codons beginning with uridine, leading to the formation of N6-(dimethylallyl)adenosine (i(6)A). The protein is tRNA dimethylallyltransferase of Campylobacter jejuni subsp. jejuni serotype O:23/36 (strain 81-176).